The chain runs to 372 residues: 4-hydroxy-3-methylbut-2-en-1-yl diphosphate synthase (flavodoxin) (372 aa).

C270, C273, C305, and E312 together coordinate [4Fe-4S] cluster.

The protein belongs to the IspG family. The cofactor is [4Fe-4S] cluster.

It carries out the reaction (2E)-4-hydroxy-3-methylbut-2-enyl diphosphate + oxidized [flavodoxin] + H2O + 2 H(+) = 2-C-methyl-D-erythritol 2,4-cyclic diphosphate + reduced [flavodoxin]. It participates in isoprenoid biosynthesis; isopentenyl diphosphate biosynthesis via DXP pathway; isopentenyl diphosphate from 1-deoxy-D-xylulose 5-phosphate: step 5/6. Converts 2C-methyl-D-erythritol 2,4-cyclodiphosphate (ME-2,4cPP) into 1-hydroxy-2-methyl-2-(E)-butenyl 4-diphosphate. In Aliivibrio salmonicida (strain LFI1238) (Vibrio salmonicida (strain LFI1238)), this protein is 4-hydroxy-3-methylbut-2-en-1-yl diphosphate synthase (flavodoxin).